The chain runs to 77 residues: Omega-conotoxin TxVII (77 aa).

Residues 1–22 (MKLTCMMIVAVLFLTAWTFATA) form the signal peptide. Residues 23–49 (DDSGNGLENLFPKAHHEMKNPEASKLN) constitute a propeptide that is removed on maturation. Intrachain disulfides connect C52/C67, C59/C71, and C66/C75.

Expressed by the venom duct.

The protein resides in the secreted. In terms of biological role, omega-conotoxins act at presynaptic membranes, they bind and block voltage-gated calcium channels (Cav). Specifically acts on L-type channels. It blocks molluscan dihydropyridine-sensitive calcium channels. The sequence is that of Omega-conotoxin TxVII from Conus textile (Cloth-of-gold cone).